The sequence spans 198 residues: Probable molybdenum cofactor guanylyltransferase (198 aa).

Residues 9–11, lysine 22, aspartate 66, and aspartate 95 each bind GTP; that span reads LAG. Residue aspartate 95 participates in Mg(2+) binding.

The protein belongs to the MobA family. Mg(2+) is required as a cofactor.

Its subcellular location is the cytoplasm. The enzyme catalyses Mo-molybdopterin + GTP + H(+) = Mo-molybdopterin guanine dinucleotide + diphosphate. Its function is as follows. Transfers a GMP moiety from GTP to Mo-molybdopterin (Mo-MPT) cofactor (Moco or molybdenum cofactor) to form Mo-molybdopterin guanine dinucleotide (Mo-MGD) cofactor. This is Probable molybdenum cofactor guanylyltransferase from Clostridium perfringens (strain SM101 / Type A).